A 481-amino-acid chain; its full sequence is MNFNSSKYISHLPESLLPNDASPEWNNKADNAWQLTAATLVGLQTVPGLVILYGSMVKKKWAVNSAFMALYAFAAVLVCWVLWAHHMAFGTKLLPFVGKPNFALSQKFLLSKASTNYYLPMADFVFYQFAFAAITLVLLGGSLLGRMNFYAWMLFVPLWLTLSYTVGAFTIWGNGFLEGKIIDYAGGFVIHLSSGVAGFTAAYWVGPRTSNDRQNFPPNNIIHMLGGAGFLWMGWTGFNGGAPFQVGEITSLAIFNTHLCTATSILVWISLDMAVYKKGSLIGSVQGMMTGLVCITPGAGLVDPWAAILMGALSGSIPWYTMMVLHKKSPFFQSVDDTLGVFHTHAVAGILGGILSGVFAKPKLLRILYGPYGSGLLYSYFDDNIGQGIKQMWYQLLGAVFITIWNVVITSLICILLNRFVNLRMQEEDLEVGDDAAHGEEAYVLWGDGERMRLPLRRDISPIIPYISHQRHSFPINKIDE.

The Extracellular segment spans residues 1–36 (MNFNSSKYISHLPESLLPNDASPEWNNKADNAWQLT). An N-linked (GlcNAc...) asparagine glycan is attached at Asn-4. The helical transmembrane segment at 37 to 57 (AATLVGLQTVPGLVILYGSMV) threads the bilayer. Over 58–62 (KKKWA) the chain is Cytoplasmic. The chain crosses the membrane as a helical span at residues 63 to 83 (VNSAFMALYAFAAVLVCWVLW). Residues 84-123 (AHHMAFGTKLLPFVGKPNFALSQKFLLSKASTNYYLPMAD) lie on the Extracellular side of the membrane. Residues 124 to 144 (FVFYQFAFAAITLVLLGGSLL) form a helical membrane-spanning segment. Topologically, residues 145–151 (GRMNFYA) are cytoplasmic. The chain crosses the membrane as a helical span at residues 152–172 (WMLFVPLWLTLSYTVGAFTIW). Residues 173-184 (GNGFLEGKIIDY) lie on the Extracellular side of the membrane. The helical transmembrane segment at 185–205 (AGGFVIHLSSGVAGFTAAYWV) threads the bilayer. Residues 206-220 (GPRTSNDRQNFPPNN) are Cytoplasmic-facing. Residues 221-241 (IIHMLGGAGFLWMGWTGFNGG) traverse the membrane as a helical segment. Topologically, residues 242–248 (APFQVGE) are extracellular. The helical transmembrane segment at 249-269 (ITSLAIFNTHLCTATSILVWI) threads the bilayer. Topologically, residues 270-281 (SLDMAVYKKGSL) are cytoplasmic. Residues 282-302 (IGSVQGMMTGLVCITPGAGLV) form a helical membrane-spanning segment. At 303 to 304 (DP) the chain is on the extracellular side. The helical transmembrane segment at 305–325 (WAAILMGALSGSIPWYTMMVL) threads the bilayer. The Cytoplasmic portion of the chain corresponds to 326 to 338 (HKKSPFFQSVDDT). The chain crosses the membrane as a helical span at residues 339 to 359 (LGVFHTHAVAGILGGILSGVF). The Extracellular segment spans residues 360-363 (AKPK). A helical membrane pass occupies residues 364 to 381 (LLRILYGPYGSGLLYSYF). Residues 382 to 395 (DDNIGQGIKQMWYQ) are Cytoplasmic-facing. The helical transmembrane segment at 396–416 (LLGAVFITIWNVVITSLICIL) threads the bilayer. Residues 417–481 (LNRFVNLRMQ…HSFPINKIDE (65 aa)) are Extracellular-facing.

It belongs to the ammonia transporter channel (TC 1.A.11.2) family. In terms of tissue distribution, mostly expressed in mycorrhizal roots. Also observed in the cortex and endodermis of non-mycorrhizal roots.

It localises to the cell membrane. In terms of biological role, involved in ammonium transport. Required for arbuscular mycorrhizal (AM) symbiosis with AM fungi (e.g. Glomus versiforme and G.intraradices) in low nitrogen conditions. This chain is Ammonium transporter 2 member 3, found in Medicago truncatula (Barrel medic).